The chain runs to 1499 residues: ABC multidrug transporter A-2 (1499 aa).

Disordered regions lie at residues 1 to 66 and 80 to 107; these read MAMQ…IDQE and QISQKSAGPTNTFLDPSSDPELDPNSDK. A compositionally biased stretch (polar residues) spans 16–30; the sequence is ISSSAGQEVASTIRR. Basic and acidic residues predominate over residues 31-51; the sequence is QFTDADADRIVETPLGEKADS. Positions 80–94 are enriched in polar residues; that stretch reads QISQKSAGPTNTFLD. Residues 166-415 enclose the ABC transporter 1 domain; the sequence is LRSILGCRNR…FIDMGFDCPD (250 aa). Residue Asn339 is glycosylated (N-linked (GlcNAc...) asparagine). Helical transmembrane passes span 526–546, 561–581, 606–626, 635–655, and 669–689; these read MTLATVIGNSIMAFIVSSVFY, LLFFAILLNAFASSLEILTLW, MIVDLPSKFLVSVVFNLILYF, GHFFVFYLFSVTITLTMSNIF, and MVPSSIFMMILVIYTGFTIPV. The N-linked (GlcNAc...) asparagine glycan is linked to Asn763. Residues 778–798 form a helical membrane-spanning segment; that stretch reads GIILGFFFFFLAAYIICSELV. Residues 857–1100 enclose the ABC transporter 2 domain; sequence FHWQDVCYDI…LIKYFENKGS (244 aa). 893–900 lines the ATP pocket; it reads GVTGAGKT. The next 5 helical transmembrane spans lie at 1193 to 1213, 1227 to 1247, 1268 to 1288, 1317 to 1337, and 1353 to 1373; these read YIYSKAATSIIPPLFIGFTFW, FAIFMLLVIFPNLVQQMMPYF, AFMLASILVELPWNILMAVPA, LLILIFMMFTSTFSSMIIAGI, and LCLIFNGVLASPSALPGFWIF. Asn1414 is a glycosylation site (N-linked (GlcNAc...) asparagine). A helical membrane pass occupies residues 1466–1486; sequence GLLFVYIVFNIFAAIFLYWLI.

It belongs to the ABC transporter superfamily. ABCG family. PDR (TC 3.A.1.205) subfamily.

The protein localises to the cell membrane. It catalyses the reaction itraconazole(in) + ATP + H2O = itraconazole(out) + ADP + phosphate + H(+). It carries out the reaction voriconazole(in) + ATP + H2O = voriconazole(out) + ADP + phosphate + H(+). Its activity is regulated as follows. The efflux inhibitor FK506 impairs the transport activity. Pleiotropic ABC efflux transporter that confers resistance to structurally and functionally unrelated compounds including azoles such as itraconazole, posaconazole, and voriconazole. The protein is ABC multidrug transporter A-2 of Aspergillus fumigatus (strain ATCC MYA-4609 / CBS 101355 / FGSC A1100 / Af293) (Neosartorya fumigata).